A 448-amino-acid chain; its full sequence is Thymidine phosphorylase (448 aa).

The protein belongs to the thymidine/pyrimidine-nucleoside phosphorylase family. In terms of assembly, homodimer.

It catalyses the reaction thymidine + phosphate = 2-deoxy-alpha-D-ribose 1-phosphate + thymine. It participates in pyrimidine metabolism; dTMP biosynthesis via salvage pathway; dTMP from thymine: step 1/2. Functionally, the enzymes which catalyze the reversible phosphorolysis of pyrimidine nucleosides are involved in the degradation of these compounds and in their utilization as carbon and energy sources, or in the rescue of pyrimidine bases for nucleotide synthesis. The protein is Thymidine phosphorylase of Vibrio cholerae serotype O1 (strain ATCC 39315 / El Tor Inaba N16961).